The primary structure comprises 284 residues: P2R1A-PPP2R2A-interacting phosphatase regulator 1 (284 aa).

3 disordered regions span residues 1–32 (MAQE…SNSA), 112–198 (EESL…PIKR), and 235–284 (AHTL…LPID). 2 stretches are compositionally biased toward low complexity: residues 152–164 (SPSL…SSGL) and 172–184 (PTRR…SQSP). Residues 258–269 (STGSPVSLSDSR) are compositionally biased toward polar residues.

Belongs to the FAM122 family.

The protein localises to the nucleus. It localises to the cytoplasm. Acts as an inhibitor of serine/threonine-protein phosphatase 2A (PP2A) activity. Potentiates ubiquitin-mediated proteasomal degradation of serine/threonine-protein phosphatase 2A catalytic subunit alpha (PPP2CA). Inhibits PP2A-mediated dephosphorylation of WEE1, promoting ubiquitin-mediated proteolysis of WEE1, thereby releasing G2/M checkpoint. The protein is P2R1A-PPP2R2A-interacting phosphatase regulator 1 of Gallus gallus (Chicken).